A 175-amino-acid chain; its full sequence is Bifunctional protein PyrR (175 aa).

Substrate contacts are provided by residues 40 to 41 (TR), 102 to 110 (DDVLYTGRT), Arg-135, and Val-159. A PRPP-binding motif is present at residues 98-110 (VVIIDDVLYTGRT).

It belongs to the purine/pyrimidine phosphoribosyltransferase family. PyrR subfamily. As to quaternary structure, homodimer and homohexamer; in equilibrium.

The enzyme catalyses UMP + diphosphate = 5-phospho-alpha-D-ribose 1-diphosphate + uracil. Functionally, regulates transcriptional attenuation of the pyrimidine nucleotide (pyr) operon by binding in a uridine-dependent manner to specific sites on pyr mRNA. This disrupts an antiterminator hairpin in the RNA and favors formation of a downstream transcription terminator, leading to a reduced expression of downstream genes. Its function is as follows. Also displays a weak uracil phosphoribosyltransferase activity which is not physiologically significant. In Staphylococcus epidermidis (strain ATCC 12228 / FDA PCI 1200), this protein is Bifunctional protein PyrR.